The following is a 413-amino-acid chain: Phosphopentomutase (413 aa).

Mn(2+) is bound by residues aspartate 11, aspartate 306, histidine 311, aspartate 347, histidine 348, and histidine 359.

It belongs to the phosphopentomutase family. Mn(2+) is required as a cofactor.

It is found in the cytoplasm. The enzyme catalyses 2-deoxy-alpha-D-ribose 1-phosphate = 2-deoxy-D-ribose 5-phosphate. It carries out the reaction alpha-D-ribose 1-phosphate = D-ribose 5-phosphate. Its pathway is carbohydrate degradation; 2-deoxy-D-ribose 1-phosphate degradation; D-glyceraldehyde 3-phosphate and acetaldehyde from 2-deoxy-alpha-D-ribose 1-phosphate: step 1/2. Its function is as follows. Isomerase that catalyzes the conversion of deoxy-ribose 1-phosphate (dRib-1-P) and ribose 1-phosphate (Rib-1-P) to deoxy-ribose 5-phosphate (dRib-5-P) and ribose 5-phosphate (Rib-5-P), respectively. This chain is Phosphopentomutase, found in Helicobacter pylori (strain G27).